Reading from the N-terminus, the 143-residue chain is Nucleoside diphosphate kinase (143 aa).

ATP is bound by residues K11, F59, R87, T93, R104, and N114. The Pros-phosphohistidine intermediate role is filled by H117.

It belongs to the NDK family. Homotetramer. Mg(2+) is required as a cofactor.

It localises to the cytoplasm. The enzyme catalyses a 2'-deoxyribonucleoside 5'-diphosphate + ATP = a 2'-deoxyribonucleoside 5'-triphosphate + ADP. It catalyses the reaction a ribonucleoside 5'-diphosphate + ATP = a ribonucleoside 5'-triphosphate + ADP. Functionally, major role in the synthesis of nucleoside triphosphates other than ATP. The ATP gamma phosphate is transferred to the NDP beta phosphate via a ping-pong mechanism, using a phosphorylated active-site intermediate. The polypeptide is Nucleoside diphosphate kinase (Colwellia psychrerythraea (strain 34H / ATCC BAA-681) (Vibrio psychroerythus)).